A 239-amino-acid polypeptide reads, in one-letter code: Ribonuclease PH (239 aa).

Residues Arg86 and 124-126 each bind phosphate; that span reads GTR.

It belongs to the RNase PH family. Homohexameric ring arranged as a trimer of dimers.

It catalyses the reaction tRNA(n+1) + phosphate = tRNA(n) + a ribonucleoside 5'-diphosphate. Phosphorolytic 3'-5' exoribonuclease that plays an important role in tRNA 3'-end maturation. Removes nucleotide residues following the 3'-CCA terminus of tRNAs; can also add nucleotides to the ends of RNA molecules by using nucleoside diphosphates as substrates, but this may not be physiologically important. Probably plays a role in initiation of 16S rRNA degradation (leading to ribosome degradation) during starvation. This chain is Ribonuclease PH, found in Rhizobium etli (strain CIAT 652).